A 145-amino-acid polypeptide reads, in one-letter code: MSDFENFFRTDIVPEELSIDSLSFVGDAVYSLYFRIKTLRSAKRRTGYQHNLTLLYVEAKGQRKALEVIEKFLSEEERIIVRRGYNSRGARKRGDDENYKCATALEALVGYLFLKGRYRRLEELLEKVENDVSSWKKCAERDSKT.

The active site involves aspartate 27.

Belongs to the MrnC RNase family. In terms of assembly, homodimer. Mg(2+) is required as a cofactor.

The protein localises to the cytoplasm. Functionally, involved in correct processing of both the 5' and 3' ends of 23S rRNA precursor. Processes 30S rRNA precursor transcript even in absence of ribonuclease 3 (Rnc); Rnc processes 30S rRNA into smaller rRNA precursors. This Kosmotoga olearia (strain ATCC BAA-1733 / DSM 21960 / TBF 19.5.1) protein is Mini-ribonuclease 3.